We begin with the raw amino-acid sequence, 319 residues long: Aspartate carbamoyltransferase catalytic subunit (319 aa).

R57 and T58 together coordinate carbamoyl phosphate. L-aspartate is bound at residue K85. Carbamoyl phosphate is bound by residues R107, H135, and Q138. L-aspartate is bound by residues R168 and R222. 2 residues coordinate carbamoyl phosphate: G263 and P264.

Belongs to the aspartate/ornithine carbamoyltransferase superfamily. ATCase family. As to quaternary structure, heterododecamer (2C3:3R2) of six catalytic PyrB chains organized as two trimers (C3), and six regulatory PyrI chains organized as three dimers (R2).

The enzyme catalyses carbamoyl phosphate + L-aspartate = N-carbamoyl-L-aspartate + phosphate + H(+). It participates in pyrimidine metabolism; UMP biosynthesis via de novo pathway; (S)-dihydroorotate from bicarbonate: step 2/3. Functionally, catalyzes the condensation of carbamoyl phosphate and aspartate to form carbamoyl aspartate and inorganic phosphate, the committed step in the de novo pyrimidine nucleotide biosynthesis pathway. In Paracoccus denitrificans (strain Pd 1222), this protein is Aspartate carbamoyltransferase catalytic subunit.